The primary structure comprises 324 residues: Probable WRKY transcription factor 53 (324 aa).

The tract at residues 93–126 (NPGSVPESPASINGSPRSEEFADGGGSSESHHRQ) is disordered. The WRKY DNA-binding region spans 152–220 (GLEGPQDDVF…YRGTHTCSQA (69 aa)).

Belongs to the WRKY group III family. In terms of assembly, interacts with ESR/ESP and UPL5. Binds to WRKY30. Ubiquitinated by UPL5. Ubiquitination leads to its subsequent degradation, thus controlling the timing of leaf senescence.

It localises to the nucleus. Its function is as follows. Transcription factor. Interacts specifically with the W box (5'-(T)TGAC[CT]-3'), a frequently occurring elicitor-responsive cis-acting element. May regulate the early events of leaf senescence. Negatively regulates the expression of ESR/ESP. Together with WRKY46 and WRKY70, promotes resistance to P.syringae, probably by enhancing salicylic acid (SA)- dependent genes. Contributes to the suppression of jasmonic acid (MeJA)-induced expression of PDF1.2. This is Probable WRKY transcription factor 53 from Arabidopsis thaliana (Mouse-ear cress).